Here is a 439-residue protein sequence, read N- to C-terminus: ATP-dependent RNA helicase RhlB (439 aa).

The Q motif motif lies at 9–37 (QKFADLPLHPEVKQALAENGFEFCTPIQA). The region spanning 40–219 (LPVLLQSKDI…YDHMNDPVKV (180 aa)) is the Helicase ATP-binding domain. Position 53–60 (53–60 (AQTGTGKT)) interacts with ATP. Residues 165–168 (DEAD) carry the DEAD box motif. A Helicase C-terminal domain is found at 243–390 (KMRLLLTLIE…VSNYDSSALL (148 aa)). The interval 398–439 (KIPRKHPAGTRNLRERAGAGRPQGAHRSGGRPPRHDRTRRHS) is disordered. Over residues 425-439 (SGGRPPRHDRTRRHS) the composition is skewed to basic residues.

Belongs to the DEAD box helicase family. RhlB subfamily. As to quaternary structure, component of the RNA degradosome, which is a multiprotein complex involved in RNA processing and mRNA degradation.

It localises to the cytoplasm. It catalyses the reaction ATP + H2O = ADP + phosphate + H(+). DEAD-box RNA helicase involved in RNA degradation. Has RNA-dependent ATPase activity and unwinds double-stranded RNA. The chain is ATP-dependent RNA helicase RhlB from Shewanella putrefaciens (strain CN-32 / ATCC BAA-453).